Consider the following 462-residue polypeptide: MILNLIILLAISIVASASNIAAYWGQNAGGDQQTLGDYCSSSPASIIILSFLDGFPNLSLNFANQCSGTFSSGLAHCSQIGSDIKSCQQQGKTILLSLGGATGNYGFSSDSEAVQFAGTLWNKFGGGKDSERPFDDAIVDGFDFDIENKDQTGYAALATQLRKYFSTGTKSYYLSAAPQCPYPDESVGDLMSQVDLDFAFIQFYNNYCSLNQQFNWNSWSNYARGKSIKLYLGLPGSSSSAGSGFVGLSTVQRVVASIKGDSSFGGISIWDISSAENGGYLNQLYQALSGSGSPAAPSNSYQPNTPLTRTYGGSTATASAYISVGFTAGATHGSTTTNDLLAWIDSLFGSSQSSVQQYATPVQSVTATPQPVAATTTSAPKPTASAFNWFGWFDGTTTSTTLQTVYSTVPADQTVYVTLTTTVGSQMLQSLFDKRDVIAEAKSTNLQICWLLFIPLLALICS.

An N-terminal signal peptide occupies residues 1–17 (MILNLIILLAISIVASA). One can recognise a GH18 domain in the interval 18 to 291 (SNIAAYWGQN…NQLYQALSGS (274 aa)). N-linked (GlcNAc...) asparagine glycosylation is present at Asn57. Glu147 functions as the Proton donor in the catalytic mechanism.

This sequence belongs to the glycosyl hydrolase 18 family. Chitinase class III subfamily.

It localises to the secreted. It catalyses the reaction Random endo-hydrolysis of N-acetyl-beta-D-glucosaminide (1-&gt;4)-beta-linkages in chitin and chitodextrins.. In Candida albicans (Yeast), this protein is Chitinase 1 (CHT1).